The sequence spans 160 residues: Cytochrome b6-f complex subunit 4 (160 aa).

3 consecutive transmembrane segments (helical) span residues 36–56, 95–115, and 131–151; these read LLYI…GLSV, LLGV…PFIE, and TLFL…TLPI.

This sequence belongs to the cytochrome b family. PetD subfamily. As to quaternary structure, the 4 large subunits of the cytochrome b6-f complex are cytochrome b6, subunit IV (17 kDa polypeptide, petD), cytochrome f and the Rieske protein, while the 4 small subunits are petG, petL, petM and petN. The complex functions as a dimer.

It is found in the plastid. The protein localises to the chloroplast thylakoid membrane. In terms of biological role, component of the cytochrome b6-f complex, which mediates electron transfer between photosystem II (PSII) and photosystem I (PSI), cyclic electron flow around PSI, and state transitions. This chain is Cytochrome b6-f complex subunit 4, found in Tetradesmus obliquus (Green alga).